The chain runs to 674 residues: Electrogenic aspartate/glutamate antiporter SLC25A13, mitochondrial (674 aa).

Alanine 2 is subject to N-acetylalanine. The tract at residues 2–295 is regulatory N-terminal domain; sequence AAAKVALTKR…TLADIERIAP (294 aa). At 2-331 the chain is on the mitochondrial intermembrane side; the sequence is AAAKVALTKR…LLQVAESAYR (330 aa). 4 EF-hand domains span residues 51–86, 87–122, 123–157, and 158–193; these read SQPN…SVLC, APDA…TTIH, QHIP…FLLE, and IQLE…IRPH. Positions 66, 68, 70, 72, and 77 each coordinate Ca(2+). Residues 296–311 form a linker loop domain region; the sequence is LEEGTLPFNLAEAQRQ. The interval 321–611 is carrier domain; the sequence is VLLQVAESAY…LQRWFYIDFG (291 aa). Solcar repeat units lie at residues 326–418, 426–510, and 518–605; these read AESA…VRDK, VPLA…ARAS, and VSPG…LQRW. The helical transmembrane segment at 332–349 threads the bilayer; the sequence is FGLGSVAGAVGATAVYPI. The Mitochondrial matrix portion of the chain corresponds to 350–392; the sequence is DLVKTRMQNQRSTGSFVGELMYKNSFDCFKKVLRYEGFFGLYR. N6-acetyllysine is present on residues lysine 353 and lysine 372. A helical transmembrane segment spans residues 393–412; that stretch reads GLLPQLLGVAPEKAIKLTVN. At 413–435 the chain is on the mitochondrial intermembrane side; it reads DFVRDKFMHKDGSVPLAAEILAG. Residues 436–449 form a helical membrane-spanning segment; the sequence is GCAGGSQVIFTNPL. Residues 450 to 484 lie on the Mitochondrial matrix side of the membrane; it reads EIVKIRLQVAGEITTGPRVSALSVVRDLGFFGIYK. Lysine 453 carries the N6-methyllysine modification. Lysine 484 is modified (N6-acetyllysine; alternate). Lysine 484 is modified (N6-succinyllysine; alternate). The helical transmembrane segment at 485–504 threads the bilayer; that stretch reads GAKACFLRDIPFSAIYFPCY. At 505–523 the chain is on the mitochondrial intermembrane side; that stretch reads AHARASFANEDGQVSPGSL. A helical membrane pass occupies residues 524–541; it reads LLAGAIAGMPAASLVTPA. Topologically, residues 542–580 are mitochondrial matrix; it reads DVIKTRLQVAARAGQTTYSGVIDCFKKILREEGPKALWK. An N6-succinyllysine modification is found at lysine 580. The chain crosses the membrane as a helical span at residues 581 to 599; it reads GAARVFRSSPQFGVTLLTY. The Mitochondrial intermembrane segment spans residues 600–674; it reads ELLQRWFYID…PTSEAIGGGP (75 aa). Residues 612–674 are C-terminal domain; it reads GVKPMGSEPV…PTSEAIGGGP (63 aa). Lysine 661 is subject to N6-acetyllysine.

The protein belongs to the mitochondrial carrier (TC 2.A.29) family. As to quaternary structure, homodimer (via N-terminus).

Its subcellular location is the mitochondrion inner membrane. It catalyses the reaction L-aspartate(in) + L-glutamate(out) + H(+)(out) = L-aspartate(out) + L-glutamate(in) + H(+)(in). The catalysed reaction is 3-sulfino-L-alanine(out) + L-glutamate(in) + H(+)(in) = 3-sulfino-L-alanine(in) + L-glutamate(out) + H(+)(out). The enzyme catalyses 3-sulfino-L-alanine(out) + L-aspartate(in) = 3-sulfino-L-alanine(in) + L-aspartate(out). Functionally, mitochondrial electrogenic aspartate/glutamate antiporter that favors efflux of aspartate and entry of glutamate and proton within the mitochondria as part of the malate-aspartate shuttle. Also mediates the uptake of L-cysteinesulfinate (3-sulfino-L-alanine) by mitochondria in exchange of L-glutamate and proton. Can also exchange L-cysteinesulfinate with aspartate in their anionic form without any proton translocation. Lacks transport activity towards gamma-aminobutyric acid (GABA). In Macaca fascicularis (Crab-eating macaque), this protein is Electrogenic aspartate/glutamate antiporter SLC25A13, mitochondrial.